We begin with the raw amino-acid sequence, 962 residues long: MTKQTLTQLEQHDLFLRRHIGPDSSQQQEMLNYVGAESLDDLTAQIVPESIRLNQELSIGDSCGEAEGIAYIRGLAKQNQVFKSYIGMGYYGTQVPNVILRNVFENPGWYTAYTPYQPEIAQGRLEAILNFQQVSMDLTGLDLASASLLDEATAAAEAMALAKRVSKAKKANIFFVADDVFPQTLDVVKTRAECFGFEVVVGPAHEAVNHELFGALFQYSNRFGQITDFTDLFAELRAKNVVVTVAADIMSLVLLKSPGAMGADVVFGSAQRFGVPMGFGGPHAAFFVARDEHKRSMPGRIIGVSKDTRGNRALRMAMQTREQHIRREKANSNICTAQILLANMASFYAVFHGPQGLKTIASRINRFTDILAAGLQAKGVSLVNNTWFDTISIKGLDVAAVNARALAAEMNLRFDADGIVGVSLDETTLRTDIEALFDVILGAGHGLDVAALDAQIVAQGSQSIPEALVRQDAILSHPTFNRYQSETEMMRYIKRLESKDLALNYSMISLGSCTMKLNAAVEMLPVSWPEFANMHPFCPLDQAKGYTQLIEELSSWLVNVTGYDAVCIQPNSGAQGEYAGLLAIRKYHESRGEAHRNICLIPQSAHGTNPASAQLAGMQVVVTACDKQGNVDLEDLKAKAAEVAENLSCIMITYPSTHGVYEESIREICNIVHQHGGQVYLDGANMNAQVGLTSPGFIGADVSHLNLHKTFAIPHGGGGPGMGPIGVKAHLAPFVAGHVVVKPGRESDNNGAVSAAPYGSAGILPISWMYIKLLGSNGLKKSTQTALLNANYVMKKLSEHYPVLFRGRNDRVAHECIIDLRPIKEASGVTEMDIAKRLNDYGFHAPTMSFPVAGTLMIEPTESESKVELDRFIDAMVSIRAEIAKVEAGEWPADNNPLHNAPHTMADIMDPAFDSRPYSREVAVFPSAAVRTNKFWPTVNRIDDVYGDRNLFCACVPLSDYE.

At K709 the chain carries N6-(pyridoxal phosphate)lysine.

The protein belongs to the GcvP family. In terms of assembly, the glycine cleavage system is composed of four proteins: P, T, L and H. Pyridoxal 5'-phosphate serves as cofactor.

The enzyme catalyses N(6)-[(R)-lipoyl]-L-lysyl-[glycine-cleavage complex H protein] + glycine + H(+) = N(6)-[(R)-S(8)-aminomethyldihydrolipoyl]-L-lysyl-[glycine-cleavage complex H protein] + CO2. In terms of biological role, the glycine cleavage system catalyzes the degradation of glycine. The P protein binds the alpha-amino group of glycine through its pyridoxal phosphate cofactor; CO(2) is released and the remaining methylamine moiety is then transferred to the lipoamide cofactor of the H protein. This Shewanella sp. (strain MR-7) protein is Glycine dehydrogenase (decarboxylating).